A 198-amino-acid polypeptide reads, in one-letter code: Recombination protein RecR (198 aa).

The C4-type zinc-finger motif lies at 57 to 72 (CSVCGHITDRDPCYIC). In terms of domain architecture, Toprim spans 80 to 175 (SVVCVVQEPK…KVTRIAHGLP (96 aa)).

It belongs to the RecR family.

Its function is as follows. May play a role in DNA repair. It seems to be involved in an RecBC-independent recombinational process of DNA repair. It may act with RecF and RecO. This chain is Recombination protein RecR, found in Bacillus cytotoxicus (strain DSM 22905 / CIP 110041 / 391-98 / NVH 391-98).